A 603-amino-acid chain; its full sequence is NADH-ubiquinone oxidoreductase chain 5 (603 aa).

Transmembrane regions (helical) follow at residues 38–58 (SIVA…MCLD), 87–107 (MMFI…SLWY), 122–142 (LIFL…QLFI), 144–160 (WEGV…WWYA), 171–191 (AILY…WFIL), 211–233 (TPLL…HPWL), 241–261 (TPVS…FLLI), 272–292 (LIQT…AVCA), 301–320 (IVAF…IGIN), 325–347 (AFLH…GSII), 370–390 (STSL…TGFY), 407–429 (WALS…MILL), 458–478 (AAGS…ASPF), 482–502 (IPLY…LTAL), and 582–602 (GMIK…LLLI).

This sequence belongs to the complex I subunit 5 family. As to quaternary structure, core subunit of respiratory chain NADH dehydrogenase (Complex I) which is composed of 45 different subunits.

It localises to the mitochondrion inner membrane. The catalysed reaction is a ubiquinone + NADH + 5 H(+)(in) = a ubiquinol + NAD(+) + 4 H(+)(out). In terms of biological role, core subunit of the mitochondrial membrane respiratory chain NADH dehydrogenase (Complex I) which catalyzes electron transfer from NADH through the respiratory chain, using ubiquinone as an electron acceptor. Essential for the catalytic activity and assembly of complex I. This Homo sapiens (Human) protein is NADH-ubiquinone oxidoreductase chain 5 (MT-ND5).